Consider the following 188-residue polypeptide: dCTP deaminase (188 aa).

DCTP contacts are provided by residues 111 to 116 (KSTYAR), 135 to 137 (TLE), Q156, Y170, and Q180. The active-site Proton donor/acceptor is the E137.

Belongs to the dCTP deaminase family. In terms of assembly, homotrimer.

The catalysed reaction is dCTP + H2O + H(+) = dUTP + NH4(+). Its pathway is pyrimidine metabolism; dUMP biosynthesis; dUMP from dCTP (dUTP route): step 1/2. In terms of biological role, catalyzes the deamination of dCTP to dUTP. The chain is dCTP deaminase from Coxiella burnetii (strain CbuK_Q154) (Coxiella burnetii (strain Q154)).